Reading from the N-terminus, the 40-residue chain is Photosystem II reaction center protein J (40 aa).

The helical transmembrane segment at 8–28 (IPLWVIGTVAGILVIGLIGIF) threads the bilayer.

The protein belongs to the PsbJ family. PSII is composed of 1 copy each of membrane proteins PsbA, PsbB, PsbC, PsbD, PsbE, PsbF, PsbH, PsbI, PsbJ, PsbK, PsbL, PsbM, PsbT, PsbX, PsbY, PsbZ, Psb30/Ycf12, at least 3 peripheral proteins of the oxygen-evolving complex and a large number of cofactors. It forms dimeric complexes.

The protein resides in the plastid. It localises to the chloroplast thylakoid membrane. One of the components of the core complex of photosystem II (PSII). PSII is a light-driven water:plastoquinone oxidoreductase that uses light energy to abstract electrons from H(2)O, generating O(2) and a proton gradient subsequently used for ATP formation. It consists of a core antenna complex that captures photons, and an electron transfer chain that converts photonic excitation into a charge separation. The polypeptide is Photosystem II reaction center protein J (Lepidium virginicum (Virginia pepperweed)).